We begin with the raw amino-acid sequence, 234 residues long: Small ribosomal subunit protein uS3 (234 aa).

One can recognise a KH type-2 domain in the interval 39–109 (IRTLINKHYG…EVRIAIYEVK (71 aa)).

This sequence belongs to the universal ribosomal protein uS3 family. Part of the 30S ribosomal subunit. Forms a tight complex with proteins S10 and S14.

Functionally, binds the lower part of the 30S subunit head. Binds mRNA in the 70S ribosome, positioning it for translation. The chain is Small ribosomal subunit protein uS3 from Coprothermobacter proteolyticus (strain ATCC 35245 / DSM 5265 / OCM 4 / BT).